The primary structure comprises 160 residues: MEAERPQEEEDGEQGPPQDEEGWPPPNSTTRPWRSAPPSPPPPGTRHTALGPRSASLLSLQTELLLDLVAEAQSRRLEEQRATFYTPQNPSSLAPAPLRPLEDREQLYSTILSHQCQRMEAQRSEPPLPPGGQELLELLLRVQGGGRMEEQRSRPPTHTC.

Residues 1-55 (MEAERPQEEEDGEQGPPQDEEGWPPPNSTTRPWRSAPPSPPPPGTRHTALGPRSA) are disordered. The span at 7–22 (QEEEDGEQGPPQDEEG) shows a compositional bias: acidic residues. Ser-35, Ser-39, Ser-56, and Ser-59 each carry phosphoserine. The span at 35-44 (SAPPSPPPPG) shows a compositional bias: pro residues. Phosphothreonine is present on Thr-62. GoLoco domains follow at residues 62–84 (TELL…RATF), 104–126 (REQL…RSEP), and 132–155 (GQEL…RSRP).

In terms of tissue distribution, expressed in heart, placenta, lung and liver.

The protein resides in the cytoplasm. Functionally, interacts with subunit of G(i) alpha proteins and regulates the activation of G(i) alpha proteins. This is G-protein-signaling modulator 3 (GPSM3) from Homo sapiens (Human).